Here is a 131-residue protein sequence, read N- to C-terminus: Sulfurtransferase TusD (131 aa).

Residue Cys-81 is the Cysteine persulfide intermediate of the active site.

This sequence belongs to the DsrE/TusD family. As to quaternary structure, heterohexamer, formed by a dimer of trimers. The hexameric TusBCD complex contains 2 copies each of TusB, TusC and TusD. The TusBCD complex interacts with TusE.

It localises to the cytoplasm. Its function is as follows. Part of a sulfur-relay system required for 2-thiolation of 5-methylaminomethyl-2-thiouridine (mnm(5)s(2)U) at tRNA wobble positions. Accepts sulfur from TusA and transfers it in turn to TusE. This is Sulfurtransferase TusD from Photorhabdus laumondii subsp. laumondii (strain DSM 15139 / CIP 105565 / TT01) (Photorhabdus luminescens subsp. laumondii).